Consider the following 188-residue polypeptide: dCTP deaminase (188 aa).

Residue 109 to 114 participates in dCTP binding; that stretch reads KSTYAR. The Proton donor/acceptor role is filled by glutamate 135. Positions 154, 168, and 178 each coordinate dCTP.

It belongs to the dCTP deaminase family. In terms of assembly, homotrimer.

The catalysed reaction is dCTP + H2O + H(+) = dUTP + NH4(+). Its pathway is pyrimidine metabolism; dUMP biosynthesis; dUMP from dCTP (dUTP route): step 1/2. Its function is as follows. Catalyzes the deamination of dCTP to dUTP. This Helicobacter acinonychis (strain Sheeba) protein is dCTP deaminase.